Consider the following 247-residue polypeptide: Capsid protein (247 aa).

Positions 1 to 28 (MSGALKRKRSDEVAWSRRRPVKKPVRRA) match the Bipartite nuclear localization signal motif. The segment at 1–39 (MSGALKRKRSDEVAWSRRRPVKKPVRRAPPPRAGPSVRR) is disordered. Residues 16-26 (SRRRPVKKPVR) show a composition bias toward basic residues.

This sequence belongs to the geminiviridae capsid protein family. In terms of assembly, homomultimer. Interacts with the movement protein. Binds to single-stranded and double-stranded viral DNA.

The protein resides in the virion. Its subcellular location is the host nucleus. Functionally, encapsidates the viral genome into characteristic twinned ('geminate') particles. Binds the genomic viral ssDNA and shuttles it into and out of the cell nucleus. Plays a role in protection of the genome from degradation, virus acquisition and transmission by insect vectors, infectivity, and systemic movement. The CP of monopartite geminiviruses is absolutely essential for virus movement. The sequence is that of Capsid protein from Megathyrsus maximus (PanSV).